The sequence spans 61 residues: Copper metallothionein 1-1 (61 aa).

Residues 1–8 constitute a propeptide that is removed on maturation; that stretch reads MFSELINF. Residues C15, C17, C19, C22, and C28 each coordinate Cu cation. K30 participates in a covalent cross-link: Glycyl lysine isopeptide (Lys-Gly) (interchain with G-Cter in ubiquitin). Positions 32, 34, 38, 44, and 46 each coordinate Cu cation. Positions 37–61 are disordered; the sequence is GCNSDDKCPCGNKSEETKKSCCSGK. Basic and acidic residues predominate over residues 40–55; sequence SDDKCPCGNKSEETKK.

This sequence belongs to the metallothionein superfamily. Type 12 family.

Protects the cell against copper toxicity by tightly chelating copper ions. May also act as a depository for copper designated for the effective transfer into the apo forms of copper proteins. The chain is Copper metallothionein 1-1 (CUP1-1) from Saccharomyces cerevisiae (strain ATCC 204508 / S288c) (Baker's yeast).